We begin with the raw amino-acid sequence, 350 residues long: Protein RecA (350 aa).

ATP is bound at residue 65 to 72 (GPESSGKT).

It belongs to the RecA family.

The protein resides in the cytoplasm. Functionally, can catalyze the hydrolysis of ATP in the presence of single-stranded DNA, the ATP-dependent uptake of single-stranded DNA by duplex DNA, and the ATP-dependent hybridization of homologous single-stranded DNAs. It interacts with LexA causing its activation and leading to its autocatalytic cleavage. This Nautilia profundicola (strain ATCC BAA-1463 / DSM 18972 / AmH) protein is Protein RecA.